We begin with the raw amino-acid sequence, 628 residues long: Phosphomethylpyrimidine synthase (628 aa).

The span at 1-14 (MTISDIGSQATTHT) shows a compositional bias: polar residues. The disordered stretch occupies residues 1–37 (MTISDIGSQATTHTPVKASKADALKTPAHRSETDARF). Basic and acidic residues predominate over residues 19–37 (SKADALKTPAHRSETDARF). Residues Asn-260, Met-289, Tyr-318, His-354, 374 to 376 (SRG), 415 to 418 (DGLR), and Glu-454 contribute to the substrate site. His-458 is a Zn(2+) binding site. A substrate-binding site is contributed by Tyr-481. His-522 contributes to the Zn(2+) binding site. 3 residues coordinate [4Fe-4S] cluster: Cys-602, Cys-605, and Cys-610.

The protein belongs to the ThiC family. As to quaternary structure, homodimer. Requires [4Fe-4S] cluster as cofactor.

It carries out the reaction 5-amino-1-(5-phospho-beta-D-ribosyl)imidazole + S-adenosyl-L-methionine = 4-amino-2-methyl-5-(phosphooxymethyl)pyrimidine + CO + 5'-deoxyadenosine + formate + L-methionine + 3 H(+). It functions in the pathway cofactor biosynthesis; thiamine diphosphate biosynthesis. Its function is as follows. Catalyzes the synthesis of the hydroxymethylpyrimidine phosphate (HMP-P) moiety of thiamine from aminoimidazole ribotide (AIR) in a radical S-adenosyl-L-methionine (SAM)-dependent reaction. The polypeptide is Phosphomethylpyrimidine synthase (Psychrobacter cryohalolentis (strain ATCC BAA-1226 / DSM 17306 / VKM B-2378 / K5)).